A 68-amino-acid polypeptide reads, in one-letter code: Small proline-rich protein 2K (68 aa).

One copy of the 1; truncated repeat lies at 21 to 26 (PKPCSP). The 3.5 X 9 AA approximate tandem repeats stretch occupies residues 21–65 (PKPCSPPKCPEPCPPPKCPETCPPQPCQRKCPPVLEAPCQQKCPS). Tandem repeats lie at residues 27–35 (PKCPEPCPP), 36–44 (PKCPETCPP), and 45–53 (QPCQRKCPP).

Belongs to the cornifin (SPRR) family. As to expression, not expressed in uterus.

Its subcellular location is the cytoplasm. Its function is as follows. Cross-linked envelope protein of keratinocytes. It is a keratinocyte protein that first appears in the cell cytosol, but ultimately becomes cross-linked to membrane proteins by transglutaminase. All that results in the formation of an insoluble envelope beneath the plasma membrane. This is Small proline-rich protein 2K (Sprr2k) from Mus musculus (Mouse).